Reading from the N-terminus, the 59-residue chain is Large ribosomal subunit protein bL32C (59 aa).

It belongs to the bacterial ribosomal protein bL32 family.

This is Large ribosomal subunit protein bL32C (rpmF3) from Enterococcus faecalis (strain ATCC 700802 / V583).